Here is a 158-residue protein sequence, read N- to C-terminus: Hypoxanthine DNA glycosylase (158 aa).

N39 is a catalytic residue.

It belongs to the uracil-DNA glycosylase (UDG) superfamily. Type 6 (HDG) family.

Functionally, excises hypoxanthine, a deamination product of adenine, from double-stranded DNA. Acts on double-stranded DNA containing G/I, T/I, A/I and C/I base pairs, but not on single-stranded inosine-containing DNA. Also has minor xanthine DNA glycosylase activity. Lacks any detectable uracil-DNA glycosylase activity. The protein is Hypoxanthine DNA glycosylase of Methanosarcina acetivorans (strain ATCC 35395 / DSM 2834 / JCM 12185 / C2A).